Reading from the N-terminus, the 206-residue chain is Pyrrolidone-carboxylate peptidase 2 (206 aa).

Catalysis depends on residues Glu78, Cys141, and His165.

The protein belongs to the peptidase C15 family. Homotetramer.

It is found in the cytoplasm. The enzyme catalyses Release of an N-terminal pyroglutamyl group from a polypeptide, the second amino acid generally not being Pro.. In terms of biological role, removes 5-oxoproline from various penultimate amino acid residues except L-proline. The polypeptide is Pyrrolidone-carboxylate peptidase 2 (Caldanaerobacter subterraneus subsp. tengcongensis (strain DSM 15242 / JCM 11007 / NBRC 100824 / MB4) (Thermoanaerobacter tengcongensis)).